The following is a 288-amino-acid chain: Executioner caspase (288 aa).

Cys131 is a catalytic residue.

It belongs to the peptidase C14A family.

In terms of biological role, may induce host cell apoptosis and contribute of the establishment of a special cell cleavage process in which apoppotic bodies are rescued by the virus and differentiate to form large vesicles in which virion assembles. In Spodoptera frugiperda ascovirus 1a (SfAV-1a), this protein is Executioner caspase.